The chain runs to 252 residues: Orotidine 5'-phosphate decarboxylase (252 aa).

Substrate is bound by residues D24, K46, 73–82 (DLKFHDIPNT), T137, R199, Q208, G228, and R229. The active-site Proton donor is K75.

Belongs to the OMP decarboxylase family. Type 1 subfamily. Homodimer.

The enzyme catalyses orotidine 5'-phosphate + H(+) = UMP + CO2. Its pathway is pyrimidine metabolism; UMP biosynthesis via de novo pathway; UMP from orotate: step 2/2. Catalyzes the decarboxylation of orotidine 5'-monophosphate (OMP) to uridine 5'-monophosphate (UMP). This is Orotidine 5'-phosphate decarboxylase from Moorella thermoacetica (strain ATCC 39073 / JCM 9320).